Consider the following 33-residue polypeptide: Cecropin-B (33 aa).

At K21 the chain carries 5-hydroxylysine.

In terms of assembly, monomer. In terms of tissue distribution, hemolymph.

The protein resides in the secreted. Its function is as follows. Cecropins have lytic and antibacterial activity against several Gram-positive and Gram-negative bacteria. Also has activity against fungi. This is Cecropin-B from Heliothis virescens (Tobacco budworm moth).